A 68-amino-acid chain; its full sequence is Riparin-1.5 amide (68 aa).

An N-terminal signal peptide occupies residues 1–15 (MKIIVVLAVLMLVSA). A propeptide spanning residues 16-41 (QVCLVSAAEMGHSSDNELSSRDLVKR) is cleaved from the precursor. Cys-47 and Cys-53 form a disulfide bridge. The residue at position 53 (Cys-53) is a Cysteine amide. Positions 57–68 (SIESSEGANGGE) are excised as a propeptide.

As to expression, expressed by the skin glands.

The protein resides in the secreted. This is Riparin-1.5 amide from Crinia riparia (Streambank froglet).